The chain runs to 241 residues: Ribosomal RNA small subunit methyltransferase J (241 aa).

Residues 94–95 and Asp-163 contribute to the S-adenosyl-L-methionine site; that span reads RD.

The protein belongs to the methyltransferase superfamily. RsmJ family.

It is found in the cytoplasm. The enzyme catalyses guanosine(1516) in 16S rRNA + S-adenosyl-L-methionine = N(2)-methylguanosine(1516) in 16S rRNA + S-adenosyl-L-homocysteine + H(+). In terms of biological role, specifically methylates the guanosine in position 1516 of 16S rRNA. This Francisella tularensis subsp. tularensis (strain FSC 198) protein is Ribosomal RNA small subunit methyltransferase J.